We begin with the raw amino-acid sequence, 666 residues long: Endogenous retrovirus group K member 6 Gag polyprotein (666 aa).

A lipid anchor (N-myristoyl glycine) is attached at glycine 2. Residues 165-264 (GKGPELVGPS…APPSRQGSKL (100 aa)) form a disordered region. Positions 232-247 (GMPPAPQGRAPYPQPP) are enriched in pro residues. 2 consecutive CCHC-type zinc fingers follow at residues 544–561 (RKCY…NCPV) and 580–597 (DLCP…QCRS). The segment at 598-642 (KFDKNGQPLSGNEQRGQPQAPQQTGAFPIQPFVPQGFQGQQPPLS) is disordered. Positions 604–622 (QPLSGNEQRGQPQAPQQTG) are enriched in polar residues. The span at 624 to 640 (FPIQPFVPQGFQGQQPP) shows a compositional bias: low complexity.

The protein belongs to the beta type-B retroviral Gag protein family. HERV class-II K(HML-2) gag subfamily. Post-translationally, myristoylation is essential for retroviral assembly. Alteration of the glycine residue leads to a block in the budding of particles and an accumulation of Gag inside the cell. Specific enzymatic cleavages may yield mature proteins.

Its subcellular location is the cell membrane. Functionally, the products of the Gag polyproteins of infectious retroviruses perform highly complex orchestrated tasks during the assembly, budding, maturation, and infection stages of the viral replication cycle. During viral assembly, the proteins form membrane associations and self-associations that ultimately result in budding of an immature virion from the infected cell. Gag precursors also function during viral assembly to selectively bind and package two plus strands of genomic RNA. Endogenous Gag proteins may have kept, lost or modified their original function during evolution. This is Endogenous retrovirus group K member 6 Gag polyprotein (ERVK-6) from Homo sapiens (Human).